We begin with the raw amino-acid sequence, 295 residues long: Trimeric intracellular cation channel type 1B.1 (295 aa).

At 1 to 27 the chain is on the lumenal side; sequence MVVPESFQLDQEILLDAGAQLHRLKMY. The helical transmembrane segment at 28 to 45 threads the bilayer; the sequence is PYFDVAHYLLMIIEVRDD. Residues 46 to 56 are Cytoplasmic-facing; it reads LGSAASIFSRK. Residues 57–80 form a discontinuously helical membrane-spanning segment; the sequence is HPLSCWLSSMLMCFADAFLANFLL. Topologically, residues 81 to 89 are lumenal; sequence GEPVIAPFK. Residues 90-107 form a helical membrane-spanning segment; the sequence is RHDDIILATIIWYLVFYA. Residues 108–119 lie on the Cytoplasmic side of the membrane; the sequence is PFDGIYKIAKIT. The chain crosses the membrane as a helical span at residues 120-148; it reads PVKCVLAVMKEVKRAYKVSHGVSHAAKLY. A 1,2-diacyl-sn-glycero-3-phospho-(1D-myo-inositol-4,5-bisphosphate) is bound by residues Lys-129 and Arg-133. At 149–150 the chain is on the lumenal side; sequence PN. Residues 151–177 form a discontinuously helical membrane-spanning segment; that stretch reads SYIVQVLVGTAKGAGSGIVRTLEQLVR. Ser-166 provides a ligand contact to a 1,2-diacyl-sn-glycero-3-phospho-(1D-myo-inositol-4,5-bisphosphate). At 178–188 the chain is on the cytoplasmic side; the sequence is GVWLPTHNELL. A helical membrane pass occupies residues 189–210; the sequence is RPSFATKACVVAASVLALEKSG. Over 211 to 215 the chain is Lumenal; it reads TYLTA. A helical membrane pass occupies residues 216 to 239; sequence PHDLVYLVIVGFFVYFKLSAVILH. Topologically, residues 240 to 295 are cytoplasmic; it reads VTDPFAPIENLFCAIFMGGIWDAVSRALAASRDRRAAGAHSNENGSSISTPEKKDQ. The interval 274–295 is disordered; the sequence is RAAGAHSNENGSSISTPEKKDQ.

This sequence belongs to the TMEM38 family. As to quaternary structure, homotrimer; trimerization probably requires binding to phosphatidylinositol 4,5-bisphosphate (PIP2).

The protein resides in the endoplasmic reticulum membrane. Functionally, potassium channel that mediates transmembrane potassium transport. Might be required for maintenance of rapid intracellular calcium release. May act as a counter-ion channel that functions in synchronization with calcium release from intracellular stores. Binds phosphatidylinositol 4,5-bisphosphate (PIP2). The chain is Trimeric intracellular cation channel type 1B.1 from Caenorhabditis elegans.